The following is a 391-amino-acid chain: Trehalose-phosphate phosphatase (391 aa).

Asp-147 functions as the Nucleophile in the catalytic mechanism. Asp-147, Asp-149, and Asp-330 together coordinate Mg(2+). 147–149 (DFD) contributes to the substrate binding site.

It belongs to the trehalose phosphatase family. Mg(2+) serves as cofactor.

It catalyses the reaction alpha,alpha-trehalose 6-phosphate + H2O = alpha,alpha-trehalose + phosphate. It functions in the pathway glycan biosynthesis; trehalose biosynthesis. Functionally, removes the phosphate from trehalose 6-phosphate to produce free trehalose. This is Trehalose-phosphate phosphatase (otsB) from Mycobacterium avium (strain 104).